The following is a 79-amino-acid chain: Anti-insect Ac4 (79 aa).

Positions 1–17 (MISLSLLLMIGVESVRD) are cleaved as a signal peptide. The 60-residue stretch at 18–77 (GYIVDFKNCVYRCVPPCDGLCKKNGGKGGSCSFLIGSGLACWCNALPDNVPIKDPLHKCP) folds into the LCN-type CS-alpha/beta domain. Cystine bridges form between Cys26–Cys76, Cys30–Cys48, Cys34–Cys58, and Cys38–Cys60.

The protein belongs to the long (4 C-C) scorpion toxin superfamily. Sodium channel inhibitor family. Alpha subfamily. Expressed by the venom gland.

The protein resides in the secreted. Alpha toxins bind voltage-independently at site-3 of sodium channels (Nav) and inhibit the inactivation of the activated channels, thereby blocking neuronal transmission. This protein is weakly toxic against insects (ED(50)&gt;2 ug per 100 mg of blowfly larvae), but is inactive against mammalian sodium channels (rNav1.2a, and rNav1.4). The sequence is that of Anti-insect Ac4 from Androctonus crassicauda (Arabian fat-tailed scorpion).